A 1164-amino-acid chain; its full sequence is Phospholipid-transporting ATPase IA (1164 aa).

Topologically, residues 1 to 75 (MPTMRRTVSE…PRFLYSQFRR (75 aa)) are cytoplasmic. Ser25 is subject to Phosphoserine. Thr28 bears the Phosphothreonine mark. Phosphoserine is present on Ser29. The chain crosses the membrane as a helical span at residues 76–96 (AANSFFLFIALLQQIPDVSPT). Topologically, residues 97–100 (GRYT) are exoplasmic loop. The chain crosses the membrane as a helical span at residues 101-121 (TLVPLLFILAVAAIKEIIEDI). The Cytoplasmic portion of the chain corresponds to 122-297 (KRHKADNAVN…SNVERITNVQ (176 aa)). Residues 298 to 318 (ILILFCILIAMSLVCSVGSAI) traverse the membrane as a helical segment. Over 319 to 339 (WNRRHSGKDWYLHLHYGGASN) the chain is Exoplasmic loop. The chain crosses the membrane as a helical span at residues 340 to 360 (FGLNFLTFIILFNNLIPISLL). The Cytoplasmic portion of the chain corresponds to 361 to 866 (VTLEVVKFTQ…KCILYCFYKN (506 aa)). The active-site 4-aspartylphosphate intermediate is Asp409. ATP is bound by residues Asp409, Lys410, and Thr411. Residue Asp409 coordinates Mg(2+). Thr411 contributes to the Mg(2+) binding site. At Ser443 the chain carries Phosphoserine. ATP contacts are provided by residues Glu508, Phe549, Lys572, Arg605, Thr685, Gly686, Asp687, 741 to 748 (ALIIDGKT), Arg775, and Lys781. Position 801 (Asp801) interacts with Mg(2+). ATP is bound by residues Asn804 and Asp805. Asp805 is a Mg(2+) binding site. The chain crosses the membrane as a helical span at residues 867 to 887 (IVLYIIEIWFAFVNGFSGQIL). The Exoplasmic loop segment spans residues 888-890 (FER). Residues 891-911 (WCIGLYNVMFTAMPPLTLGIF) traverse the membrane as a helical segment. The Cytoplasmic segment spans residues 912–939 (ERSCRKENMLKYPELYKTSQNALDFNTK). Residues 940 to 960 (VFWVHCLNGLFHSVILFWFPL) form a helical membrane-spanning segment. Topologically, residues 961–977 (KALQYGTVFGNGKTSDY) are exoplasmic loop. Residues 978 to 998 (LLLGNFVYTFVVITVCLKAGL) traverse the membrane as a helical segment. Residues 999-1008 (ETSYWTWFSH) are Cytoplasmic-facing. A helical transmembrane segment spans residues 1009–1029 (IAIWGSIALWVVFFGIYSSLW). Residues 1030-1044 (PAVPMAPDMSGEAAM) are Exoplasmic loop-facing. Residues 1045–1065 (LFSSGVFWVGLLSIPVASLLL) form a helical membrane-spanning segment. Residues 1066-1164 (DVLYKVIKRT…DTTKQRPDEW (99 aa)) are Cytoplasmic-facing. ATP is bound at residue 1095–1102 (GAVVLGKS). Phosphoserine is present on Ser1126.

This sequence belongs to the cation transport ATPase (P-type) (TC 3.A.3) family. Type IV subfamily. As to quaternary structure, component of a P4-ATPase flippase complex which consists of a catalytic alpha subunit and an accessory beta subunit. Interacts with TMEM30A to form a flippase complex; this complex forms an intermediate phosphoenzyme. Interacts with TMEM30B; this interaction is reported conflictingly. The cofactor is Mg(2+). In terms of processing, cleaved by calpain in a caspase- and calcium influx-dependent manner only during platelet apoptosis and may lead to inactivation. Found in most tissues except liver and testis. Most abundant in brain and lung. Also detected in fetal tissues. Isoform 1 is expressed in brain. Isoform 2 and isoform 3 are expressed in reticulocytes. Expressed in mouse hippocampus in both dentate gyrus (DG) and the CA3 regions. Expressed in both neuronal as well as non-neuronal cells within the DG. Highly expressed in platelets.

It is found in the cytoplasmic vesicle. It localises to the secretory vesicle. The protein localises to the chromaffin granule membrane. The protein resides in the cytoplasmic granule. Its subcellular location is the cell membrane. It is found in the endoplasmic reticulum. It localises to the golgi apparatus. The protein localises to the endomembrane system. The catalysed reaction is ATP + H2O + phospholipidSide 1 = ADP + phosphate + phospholipidSide 2.. It carries out the reaction a 1,2-diacyl-sn-glycero-3-phospho-L-serine(out) + ATP + H2O = a 1,2-diacyl-sn-glycero-3-phospho-L-serine(in) + ADP + phosphate + H(+). Its activity is regulated as follows. ATPase activity is stimulated by phosphatidylserine (PS) and minimally by phosphatidylethanolamine (PE). ATPase activity is inhibited by the vanadate and by the presence of calcium. Functionally, catalytic component of a P4-ATPase flippase complex which catalyzes the hydrolysis of ATP coupled to the transport of aminophospholipids from the outer to the inner leaflet of various membranes and ensures the maintenance of asymmetric distribution of phospholipids. Phospholipid translocation also seems to be implicated in vesicle formation and in uptake of lipid signaling molecules. In vitro, its ATPase activity is selectively and stereospecifically stimulated by phosphatidylserine (PS). The flippase complex ATP8A1:TMEM30A seems to play a role in regulation of cell migration probably involving flippase-mediated translocation of phosphatidylethanolamine (PE) at the cell membrane. Acts as aminophospholipid translocase at the cell membrane in neuronal cells; the activity is associated with hippocampus-dependent learning. May play a role in brain connectivity. This chain is Phospholipid-transporting ATPase IA, found in Mus musculus (Mouse).